The primary structure comprises 339 residues: Anthranilate phosphoribosyltransferase (339 aa).

Residues Gly-86, 89–90 (GD), Thr-94, 96–99 (NIST), 114–122 (KHGNRGVSS), and Ser-126 contribute to the 5-phospho-alpha-D-ribose 1-diphosphate site. Gly-86 is an anthranilate binding site. A Mg(2+)-binding site is contributed by Ser-98. Asn-117 serves as a coordination point for anthranilate. Arg-172 is a binding site for anthranilate. Mg(2+)-binding residues include Asp-230 and Glu-231.

The protein belongs to the anthranilate phosphoribosyltransferase family. As to quaternary structure, homodimer. It depends on Mg(2+) as a cofactor.

It carries out the reaction N-(5-phospho-beta-D-ribosyl)anthranilate + diphosphate = 5-phospho-alpha-D-ribose 1-diphosphate + anthranilate. Its pathway is amino-acid biosynthesis; L-tryptophan biosynthesis; L-tryptophan from chorismate: step 2/5. In terms of biological role, catalyzes the transfer of the phosphoribosyl group of 5-phosphorylribose-1-pyrophosphate (PRPP) to anthranilate to yield N-(5'-phosphoribosyl)-anthranilate (PRA). In Photobacterium profundum (strain SS9), this protein is Anthranilate phosphoribosyltransferase.